The primary structure comprises 140 residues: Large ribosomal subunit protein uL14 (140 aa).

Belongs to the universal ribosomal protein uL14 family.

This Nicotiana tabacum (Common tobacco) protein is Large ribosomal subunit protein uL14 (RPL23).